A 589-amino-acid polypeptide reads, in one-letter code: Glucose starvation modulator protein 1 (589 aa).

Positions 20–48 (CVFCHQKHLQCSNERPCKNCVKRNIGHEC) form a DNA-binding region, zn(2)-C6 fungal-type. Disordered stretches follow at residues 59 to 90 (LTGNGKGSSSKTKTPRKKLKSTPITASSPSVA), 218 to 240 (NNSNNTSHNDNFIAQNNNNNPEP), and 340 to 362 (ANGQTEDLLDHNKDDSRKNPGNG). The span at 80 to 90 (TPITASSPSVA) shows a compositional bias: polar residues. Over residues 347–357 (LLDHNKDDSRK) the composition is skewed to basic and acidic residues. The region spanning 471 to 542 (SLLDYKKLVE…FKFFKNIAVN (72 aa)) is the PAS domain.

Belongs to the ERT1/acuK family.

It is found in the nucleus. In terms of biological role, transcription factor which regulates nonfermentable carbon utilization. The chain is Glucose starvation modulator protein 1 (GSM1) from Candida tropicalis (strain ATCC MYA-3404 / T1) (Yeast).